Reading from the N-terminus, the 566-residue chain is Beta,beta-carotene 15,15'-dioxygenase (566 aa).

Histidine 172, histidine 237, histidine 308, and histidine 514 together coordinate Fe cation. A disordered region spans residues 530 to 566 (PAETQEVENSDHPTDPTAPELSHSENDFTAGHGGSSL).

It belongs to the carotenoid oxygenase family. Fe(2+) is required as a cofactor. In terms of tissue distribution, expressed in liver, kidney, small intestine and testis.

The protein resides in the cytoplasm. It is found in the cytosol. The enzyme catalyses all-trans-beta-carotene + O2 = 2 all-trans-retinal. It participates in cofactor metabolism; retinol metabolism. In terms of biological role, symmetrically cleaves beta-carotene into two molecules of retinal using a dioxygenase mechanism. This Mus musculus (Mouse) protein is Beta,beta-carotene 15,15'-dioxygenase.